A 570-amino-acid chain; its full sequence is MSTRISRSVYADMFGPTTGDRVRLADTDLIIEVEKDLTTYGEEVKFGGGKVIRDGMGQSQVTNKDGAADTVITNALIVDHWGIVKADVAITAGVITAIGKAGNPDVQPNVDIIIGPGTDVIAGEGKILTAGGFDSHIHFICPQQIEHALMSGVTTMLGGGTGPSHGTFATTCTPGPWHIGRMIQSFDAFPVNLGISGKGNAALPGPLKEMIEGGACALKLHEDWGTTPAAIDNCLTVADAYDIQVMIHTDTLNESGFVEDTVKAFKGRTIHAFHTEGAGGGHAPDIIKVASLENVLPSSTNPTRPFTRNTIDEHLDMLMVCHHLDPSIAEDLAFAESRIRKETIAAEDILHDLGALSMMSSDSQAMGRLGEVIIRTWQTADKMKKQRGALPQDSARNDNFRVKRYIAKYTINPAIAHGVSKLIGSVETGKMADLVLWSPAFFGVKPDCIIKGGSIVAAPMGDPNASIPTPQPVHYQPMFGAYGKALTASSVVFTSQAAAAGNLARDLGIAKKLVPVSNVRGGISKKSMIHNDATPKLEVDPETYEVRADGELLTCAPAEVLPLAQRYFMF.

One can recognise a Urease domain in the interval 131 to 570 (GGFDSHIHFI…LPLAQRYFMF (440 aa)). Ni(2+)-binding residues include H136, H138, and K219. Residue K219 is modified to N6-carboxylysine. H221 provides a ligand contact to substrate. Residues H248 and H274 each contribute to the Ni(2+) site. H322 serves as the catalytic Proton donor. D362 contributes to the Ni(2+) binding site.

This sequence belongs to the metallo-dependent hydrolases superfamily. Urease alpha subunit family. Heterotrimer of UreA (gamma), UreB (beta) and UreC (alpha) subunits. Three heterotrimers associate to form the active enzyme. Requires Ni cation as cofactor. In terms of processing, carboxylation allows a single lysine to coordinate two nickel ions.

The protein resides in the cytoplasm. It carries out the reaction urea + 2 H2O + H(+) = hydrogencarbonate + 2 NH4(+). The protein operates within nitrogen metabolism; urea degradation; CO(2) and NH(3) from urea (urease route): step 1/1. This is Urease subunit alpha from Rhodopseudomonas palustris (strain ATCC BAA-98 / CGA009).